Reading from the N-terminus, the 166-residue chain is NAD(P)H-quinone oxidoreductase subunit I, chloroplastic (166 aa).

4Fe-4S ferredoxin-type domains lie at 55–84 (GRIH…VDWK) and 95–124 (LNYS…MTEE). Residues cysteine 64, cysteine 67, cysteine 70, cysteine 74, cysteine 104, cysteine 107, cysteine 110, and cysteine 114 each coordinate [4Fe-4S] cluster.

The protein belongs to the complex I 23 kDa subunit family. In terms of assembly, NDH is composed of at least 16 different subunits, 5 of which are encoded in the nucleus. Requires [4Fe-4S] cluster as cofactor.

It localises to the plastid. Its subcellular location is the chloroplast thylakoid membrane. It catalyses the reaction a plastoquinone + NADH + (n+1) H(+)(in) = a plastoquinol + NAD(+) + n H(+)(out). It carries out the reaction a plastoquinone + NADPH + (n+1) H(+)(in) = a plastoquinol + NADP(+) + n H(+)(out). Functionally, NDH shuttles electrons from NAD(P)H:plastoquinone, via FMN and iron-sulfur (Fe-S) centers, to quinones in the photosynthetic chain and possibly in a chloroplast respiratory chain. The immediate electron acceptor for the enzyme in this species is believed to be plastoquinone. Couples the redox reaction to proton translocation, and thus conserves the redox energy in a proton gradient. The polypeptide is NAD(P)H-quinone oxidoreductase subunit I, chloroplastic (Sigesbeckia blakei).